Reading from the N-terminus, the 137-residue chain is Large ribosomal subunit protein bL17 (137 aa).

This sequence belongs to the bacterial ribosomal protein bL17 family. Part of the 50S ribosomal subunit. Contacts protein L32.

The polypeptide is Large ribosomal subunit protein bL17 (Caulobacter vibrioides (strain ATCC 19089 / CIP 103742 / CB 15) (Caulobacter crescentus)).